Consider the following 270-residue polypeptide: MIEGLKVKALICVVEIIENGINSIHAMGILLFALNILKKASVLVSRILCAWNGKLSSEYPRDPRSRLGIFKNMNIAFICDGNRRYARKLGLEDSFIKDKGLQKIYEFIEFGCFYGIKEISFFCFALSNFKRSPEEVNKLMGLVKQKIERPKEIGIRPKFRVYGRLDLLEEDVRKRLMDIEEESKNNTSIIVNIFFAYSAEDEITRGIQFNSHVDILIRTSNTKRLSNFMIRQVAKGTSVFFAKALWPELTTAHLFLILLKHRLENKYLLG.

The protein belongs to the UPP synthase family.

The protein resides in the endoplasmic reticulum membrane. The protein operates within protein modification; protein glycosylation. Its function is as follows. Cis-prenyl transferase that adds multiple copies of isopentenyl pyrophosphate (IPP) to farnesyl pyrophosphate (FPP) to produce dehydrodolichyl diphosphate (Dedol-PP). The sequence is that of Dehydrodolichyl diphosphate synthase (RER2) from Encephalitozoon cuniculi (strain GB-M1) (Microsporidian parasite).